The primary structure comprises 105 residues: Large ribosomal subunit protein uL24 (105 aa).

The protein belongs to the universal ribosomal protein uL24 family. As to quaternary structure, part of the 50S ribosomal subunit.

Its function is as follows. One of two assembly initiator proteins, it binds directly to the 5'-end of the 23S rRNA, where it nucleates assembly of the 50S subunit. One of the proteins that surrounds the polypeptide exit tunnel on the outside of the subunit. The protein is Large ribosomal subunit protein uL24 of Buchnera aphidicola subsp. Cinara cedri (strain Cc).